Consider the following 239-residue polypeptide: Ribose-5-phosphate isomerase A (239 aa).

Residues 40 to 43, 96 to 99, and 110 to 113 each bind substrate; these read SGST, DGAD, and KGGG. Catalysis depends on E119, which acts as the Proton acceptor. K137 is a substrate binding site.

This sequence belongs to the ribose 5-phosphate isomerase family. In terms of assembly, homodimer.

It carries out the reaction aldehydo-D-ribose 5-phosphate = D-ribulose 5-phosphate. The protein operates within carbohydrate degradation; pentose phosphate pathway; D-ribose 5-phosphate from D-ribulose 5-phosphate (non-oxidative stage): step 1/1. Functionally, catalyzes the reversible conversion of ribose-5-phosphate to ribulose 5-phosphate. In Methanococcus maripaludis (strain C5 / ATCC BAA-1333), this protein is Ribose-5-phosphate isomerase A.